The sequence spans 49 residues: Large ribosomal subunit protein bL33A (49 aa).

It belongs to the bacterial ribosomal protein bL33 family.

The protein is Large ribosomal subunit protein bL33A of Bacillus cytotoxicus (strain DSM 22905 / CIP 110041 / 391-98 / NVH 391-98).